The following is a 445-amino-acid chain: MREIVHLQTGQCGNQIGAAFWQTISGEHGVDGAGYYNGSLDIQLERMNVYFNEAAEKKYVPRAVLVDLEPGTMDSVRAGPFGQLFRPDNFVFVQSGAGNTWAKGHYTEGSELVDQVIDVVRREAERCDCLQGFQIIHSLGGGTGAGMGTLLISKIREEFPDRMMATFSSVVPSPKVSDTVVEPYNATLSNHQLVENSDETFCIDNEALYDICMRTLKLSEPSYGDLNHLVSAVMSGVTTCLRFPGQLNSDLRKLAVNMVPFPRLHFFMVGFAPLTSRGAYSFRVVTVPELTQKMYDPKNMMCLLDFRNGRYLTASAIFRGKVSMKEVEDQMRNVQNKNHTYFVEWIPNNVQTALCSIPPRGLKMSSTFVENSTAIQELFKRVGDQFTAMFRRKAFLHWYTGEGMDEMEFTEAESNMNDLVSEYQQYQDASISEGEDEYFDYAWAM.

GTP is bound by residues Gln-11, Glu-69, Ser-138, Gly-142, Thr-143, Gly-144, Asn-205, and Asn-227. Glu-69 provides a ligand contact to Mg(2+).

It belongs to the tubulin family. As to quaternary structure, dimer of alpha and beta chains. A typical microtubule is a hollow water-filled tube with an outer diameter of 25 nm and an inner diameter of 15 nM. Alpha-beta heterodimers associate head-to-tail to form protofilaments running lengthwise along the microtubule wall with the beta-tubulin subunit facing the microtubule plus end conferring a structural polarity. Microtubules usually have 13 protofilaments but different protofilament numbers can be found in some organisms and specialized cells. Mg(2+) is required as a cofactor.

It localises to the cytoplasm. It is found in the cytoskeleton. Functionally, tubulin is the major constituent of microtubules, a cylinder consisting of laterally associated linear protofilaments composed of alpha- and beta-tubulin heterodimers. Microtubules grow by the addition of GTP-tubulin dimers to the microtubule end, where a stabilizing cap forms. Below the cap, tubulin dimers are in GDP-bound state, owing to GTPase activity of alpha-tubulin. The protein is Tubulin beta chain (TUB2) of Ajellomyces capsulatus (Darling's disease fungus).